We begin with the raw amino-acid sequence, 255 residues long: 3-deoxy-manno-octulosonate cytidylyltransferase (255 aa).

It belongs to the KdsB family.

The protein resides in the cytoplasm. It catalyses the reaction 3-deoxy-alpha-D-manno-oct-2-ulosonate + CTP = CMP-3-deoxy-beta-D-manno-octulosonate + diphosphate. The protein operates within nucleotide-sugar biosynthesis; CMP-3-deoxy-D-manno-octulosonate biosynthesis; CMP-3-deoxy-D-manno-octulosonate from 3-deoxy-D-manno-octulosonate and CTP: step 1/1. Its pathway is bacterial outer membrane biogenesis; lipopolysaccharide biosynthesis. Activates KDO (a required 8-carbon sugar) for incorporation into bacterial lipopolysaccharide in Gram-negative bacteria. This Saccharophagus degradans (strain 2-40 / ATCC 43961 / DSM 17024) protein is 3-deoxy-manno-octulosonate cytidylyltransferase.